A 1608-amino-acid chain; its full sequence is Adenylate cyclase type 10 (1608 aa).

2 consecutive Guanylate cyclase domains span residues V42–Q179 and T293–M418. Positions 47 and 48 each coordinate Mg(2+). D47–T52 contacts ATP. K95 is a binding site for hydrogencarbonate. D99 lines the Mg(2+) pocket. ATP contacts are provided by D99 and K144. Hydrogencarbonate contacts are provided by V167, R176, and M337. ATP contacts are provided by residues V406 and N412–R416.

This sequence belongs to the adenylyl cyclase class-4/guanylyl cyclase family. It depends on Mg(2+) as a cofactor. Mn(2+) serves as cofactor. Cleavage may occur to generate the active 48 kDa form. Detected in testis (at protein level). Preferentially expressed in testis.

The protein resides in the cell membrane. It is found in the cytoplasm. It localises to the cytoskeleton. The protein localises to the perinuclear region. Its subcellular location is the nucleus. The protein resides in the cell projection. It is found in the cilium. It localises to the mitochondrion. It catalyses the reaction ATP = 3',5'-cyclic AMP + diphosphate. Its activity is regulated as follows. Activated by manganese or magnesium ions. In the presence of magnesium ions, the enzyme is activated by bicarbonate. Calcium mildly increases the enzyme activity, also in the presence of magnesium ions. Its function is as follows. Catalyzes the formation of the signaling molecule cAMP. May function as sensor that mediates responses to changes in cellular bicarbonate and CO(2) levels. Has a critical role in mammalian spermatogenesis by producing the cAMP which regulates cAMP-responsive nuclear factors indispensable for sperm maturation in the epididymis. Induces capacitation, the maturational process that sperm undergo prior to fertilization. Involved in ciliary beat regulation. This Rattus norvegicus (Rat) protein is Adenylate cyclase type 10 (Adcy10).